The following is a 521-amino-acid chain: Envelope glycoprotein (521 aa).

The N-terminal stretch at 1 to 20 (MVDSTIRLVATIFLISLTQQ) is a signal peptide. Residues Asn-44, Asn-158, Asn-189, and Asn-396 are each glycosylated (N-linked (GlcNAc...) asparagine; by host). A helical transmembrane segment spans residues 501–517 (ISWVVVIGVVLVGVCLM).

In terms of assembly, homooligomer; disulfide-linked (possibly homodimer).

It localises to the virion membrane. Functionally, attaches the virus to host cellular receptor and later induces fusion of virion with host membrane. The protein is Envelope glycoprotein (P4) of Dhori virus (strain Indian/1313/61) (Dho).